Consider the following 315-residue polypeptide: Aspartate carbamoyltransferase catalytic subunit (315 aa).

Carbamoyl phosphate-binding residues include R65 and T66. K93 provides a ligand contact to L-aspartate. 3 residues coordinate carbamoyl phosphate: R115, H145, and Q148. L-aspartate contacts are provided by R179 and R234. G275 and P276 together coordinate carbamoyl phosphate.

It belongs to the aspartate/ornithine carbamoyltransferase superfamily. ATCase family. As to quaternary structure, heterododecamer (2C3:3R2) of six catalytic PyrB chains organized as two trimers (C3), and six regulatory PyrI chains organized as three dimers (R2).

It catalyses the reaction carbamoyl phosphate + L-aspartate = N-carbamoyl-L-aspartate + phosphate + H(+). Its pathway is pyrimidine metabolism; UMP biosynthesis via de novo pathway; (S)-dihydroorotate from bicarbonate: step 2/3. Functionally, catalyzes the condensation of carbamoyl phosphate and aspartate to form carbamoyl aspartate and inorganic phosphate, the committed step in the de novo pyrimidine nucleotide biosynthesis pathway. This is Aspartate carbamoyltransferase catalytic subunit from Xanthomonas oryzae pv. oryzae (strain MAFF 311018).